The following is a 340-amino-acid chain: Erythroferrone (340 aa).

An N-terminal signal peptide occupies residues 1 to 24 (MASTRRPVGARTLLACASLLAAMG). Disordered regions lie at residues 30–63 (SAEPVGTHARPQPPGAELPAPPANSPPEPTIAHA), 79–112 (SDKGINSKRRSKARRLKLGLPGPPGPPGPQGPPG), and 141–161 (HCTRDLTTPASGSPSRVPAAQ). Positions 40 to 58 (PQPPGAELPAPPANSPPEP) are enriched in pro residues. Residues 84–95 (NSKRRSKARRLK) show a composition bias toward basic residues. P99, P101, P102, P104, P105, and P107 each carry hydroxyproline. Positions 99–112 (PGPPGPPGPQGPPG) are enriched in pro residues. A compositionally biased stretch (polar residues) spans 145-154 (DLTTPASGSP). Residues 185-340 (APRVEAAFHC…SHFSAILLGL (156 aa)) enclose the C1q domain. N-linked (GlcNAc...) asparagine glycosylation is found at N229, N281, N292, and N319.

It belongs to the adipolin/erythroferrone family. Homodimer; disulfide-linked. Forms trimer, hexamers and higher molecular weight oligomers. May form heteromeric complexes with C1QTNF2 and C1QTNF12 and, to a lesser extent, with C1QTNF5 and C1QTNF10. Interacts with BMP5 and BMP7; the interaction inhibits BMP-induced transcription of HAMP. Interacts with BMP6; the interaction inhibits BMP-induced transcription of HAMP. Interacts with BMP2. Interacts with heterodimers composed of BMP2 and BMP6 in vitro, the interaction inhibits the heterodimer binding to its receptor BMPR1A /ALK3 and thereby suppresses expression of HAMP. N-glycosylated; required for secretion of the mature protein. Expressed in the soleus muscle in the leg (at protein level). Found in blood (at protein level). Weakly expressed in the heart (at protein level). Predominantly expressed in skeletal muscle and, at much lower levels, in other tissues, including lung, eye, smooth muscle, brain and kidney. Within skeletal muscles, higher expression levels in soleus as compared with plantaris. Expressed in osteoblasts, mature osteoclasts and erythroblasts. When fasting, females tend to have higher circulating levels than males. Obese mice tend to have lower expression and circulating levels as compared to lean animals. Following EPO treatment, only expressed in bone marrow and spleen.

The protein localises to the secreted. Functionally, iron-regulatory hormone that acts as an erythroid regulator after hemorrhage: produced by erythroblasts following blood loss and mediates suppression of hepcidin (HAMP) expression in the liver, thereby promoting increased iron absorption and mobilization from stores. Promotes lipid uptake into adipocytes and hepatocytes via transcriptional up-regulation of genes involved in fatty acid uptake. Inhibits apoptosis and inflammatory response in cardiomyocytes via promotion of sphingosine-1-phosphate (S1P) and cAMP-dependent activation of AKT signaling. Inhibits autophagy induced by nutrient deficiency in hepatocytes via promoting the phosphorylation of IRS1, AKT, and MTOR, and thereby subsequent activation of the AKT-MTOR signaling pathway. Negatively regulates the differentiation of osteoblasts, potentially via sequestering BMP2, and thereby inhibits the activation of SMAD signaling. The reduction in BMP2 signaling in osteoblasts also results in an increase in expression of the osteoclastogenesis-promoting factors TNFSF11/RANKL and SOST, thereby indirectly promotes bone resorption. The protein is Erythroferrone of Mus musculus (Mouse).